The sequence spans 211 residues: Imidazole glycerol phosphate synthase subunit HisH (211 aa).

In terms of domain architecture, Glutamine amidotransferase type-1 spans 4–211 (TVALLDYGSG…QLLRNWINHI (208 aa)). Residue cysteine 82 is the Nucleophile of the active site. Active-site residues include histidine 192 and glutamate 194.

As to quaternary structure, heterodimer of HisH and HisF.

Its subcellular location is the cytoplasm. It catalyses the reaction 5-[(5-phospho-1-deoxy-D-ribulos-1-ylimino)methylamino]-1-(5-phospho-beta-D-ribosyl)imidazole-4-carboxamide + L-glutamine = D-erythro-1-(imidazol-4-yl)glycerol 3-phosphate + 5-amino-1-(5-phospho-beta-D-ribosyl)imidazole-4-carboxamide + L-glutamate + H(+). It carries out the reaction L-glutamine + H2O = L-glutamate + NH4(+). Its pathway is amino-acid biosynthesis; L-histidine biosynthesis; L-histidine from 5-phospho-alpha-D-ribose 1-diphosphate: step 5/9. Functionally, IGPS catalyzes the conversion of PRFAR and glutamine to IGP, AICAR and glutamate. The HisH subunit catalyzes the hydrolysis of glutamine to glutamate and ammonia as part of the synthesis of IGP and AICAR. The resulting ammonia molecule is channeled to the active site of HisF. The protein is Imidazole glycerol phosphate synthase subunit HisH of Corynebacterium efficiens (strain DSM 44549 / YS-314 / AJ 12310 / JCM 11189 / NBRC 100395).